The chain runs to 431 residues: Keratin, type I cytoskeletal 40 (431 aa).

Residues 1-89 form a head region; that stretch reads MASDCSPTGC…CEDGVFNSNE (89 aa). In terms of domain architecture, IF rod spans 89-400; that stretch reads EKETMQFLND…GLLDSEDSRL (312 aa). The segment at 90–124 is coil 1A; it reads KETMQFLNDRLASYLEKVRGLEELNAELECRIREQ. Residues 125-135 form a linker 1 region; sequence CEEDVPLVCPD. Residues 136–236 form a coil 1B region; it reads YQCYFDTIED…HEEEVNVLRG (101 aa). Residues 237-252 form a linker 12 region; that stretch reads QLGDRLSVELDTAPTT. The segment at 253–396 is coil 2; sequence DLNRVLDEMR…NTYQGLLDSE (144 aa). The tail stretch occupies residues 397-431; it reads DSRLPCNPCSATSMSNDTCEPCSAYVICTVENSCP.

This sequence belongs to the intermediate filament family. As to quaternary structure, heterotetramer of two type I and two type II keratins.

May play a role in late hair differentiation. This chain is Keratin, type I cytoskeletal 40 (KRT40), found in Bos taurus (Bovine).